The chain runs to 502 residues: Probable glycine dehydrogenase (decarboxylating) subunit 2 (502 aa).

Lysine 273 bears the N6-(pyridoxal phosphate)lysine mark.

It belongs to the GcvP family. C-terminal subunit subfamily. In terms of assembly, the glycine cleavage system is composed of four proteins: P, T, L and H. In this organism, the P 'protein' is a heterodimer of two subunits. Pyridoxal 5'-phosphate is required as a cofactor.

It catalyses the reaction N(6)-[(R)-lipoyl]-L-lysyl-[glycine-cleavage complex H protein] + glycine + H(+) = N(6)-[(R)-S(8)-aminomethyldihydrolipoyl]-L-lysyl-[glycine-cleavage complex H protein] + CO2. In terms of biological role, the glycine cleavage system catalyzes the degradation of glycine. The P protein binds the alpha-amino group of glycine through its pyridoxal phosphate cofactor; CO(2) is released and the remaining methylamine moiety is then transferred to the lipoamide cofactor of the H protein. The chain is Probable glycine dehydrogenase (decarboxylating) subunit 2 from Staphylococcus epidermidis (strain ATCC 35984 / DSM 28319 / BCRC 17069 / CCUG 31568 / BM 3577 / RP62A).